The chain runs to 498 residues: Probable cytosol aminopeptidase (498 aa).

Residues lysine 263 and aspartate 268 each contribute to the Mn(2+) site. The active site involves lysine 275. Mn(2+)-binding residues include aspartate 286, aspartate 345, and glutamate 347. Residue arginine 349 is part of the active site.

Belongs to the peptidase M17 family. Mn(2+) serves as cofactor.

It is found in the cytoplasm. The catalysed reaction is Release of an N-terminal amino acid, Xaa-|-Yaa-, in which Xaa is preferably Leu, but may be other amino acids including Pro although not Arg or Lys, and Yaa may be Pro. Amino acid amides and methyl esters are also readily hydrolyzed, but rates on arylamides are exceedingly low.. The enzyme catalyses Release of an N-terminal amino acid, preferentially leucine, but not glutamic or aspartic acids.. Presumably involved in the processing and regular turnover of intracellular proteins. Catalyzes the removal of unsubstituted N-terminal amino acids from various peptides. This Rhodopseudomonas palustris (strain BisA53) protein is Probable cytosol aminopeptidase.